The chain runs to 628 residues: MRLSQLSHPNELHGLAISELEDVACQIRERHLQVVSTSGGHLGPGLGVVELTIALYQTLDLDVDKVIWDVGHQAYPHKLLTGRYNRFDSLRQQKGVAGYLKRTESKFDHFGAGHASTSISAALGMAIARDRKGEDYKCVAVIGDGALTGGMALEAINHAGHLPKTPLLVVLNDNDMSISPPVGALSTYLNRMRHSPPVQFISDSVQESVKNLPFMGDAIQEEFKSLTGSVRRLAVPSVGAVFEELGFTYMGPVDGHDIAELTRTFNAAHKVGGPVMVHVATTKGKGYPYAEADQVGYHAQSSFDLTTGKSIPSKTPKPPSFSKVFGQTLVKLCEQDSKIVGITAAMAEGTALNLLQKAIPDQYVDVGIAEQHAVTLAGGMACEGIKPVVAIYSTFLQRAYDQLIHDIGIQNLPVTFVLDRAGIVGADGPTHQGQYDISYLRCIPNFTVMAPKDESELQQMLVTCINHNGPSALRIPRGSGEGAALMEEGWESLEIGKAETLEEGENLLIIGYGSMVFPAIRTAAILKEFGVNSTVINARFIRPLDEDTIHEAAKRIGKVVTMEEGTLLGGFGSAVVESFNDNDIFVPTLRIGIPDKLVDHATPQQSKESLGLTPEMMADQIRNKFNFN.

Thiamine diphosphate is bound by residues His72 and 113–115 (GHA). Asp144 is a binding site for Mg(2+). Thiamine diphosphate is bound by residues 145–146 (GA), Asn174, Tyr287, and Glu370. Asn174 is a Mg(2+) binding site.

It belongs to the transketolase family. DXPS subfamily. In terms of assembly, homodimer. Mg(2+) serves as cofactor. Thiamine diphosphate is required as a cofactor.

It carries out the reaction D-glyceraldehyde 3-phosphate + pyruvate + H(+) = 1-deoxy-D-xylulose 5-phosphate + CO2. The protein operates within metabolic intermediate biosynthesis; 1-deoxy-D-xylulose 5-phosphate biosynthesis; 1-deoxy-D-xylulose 5-phosphate from D-glyceraldehyde 3-phosphate and pyruvate: step 1/1. Catalyzes the acyloin condensation reaction between C atoms 2 and 3 of pyruvate and glyceraldehyde 3-phosphate to yield 1-deoxy-D-xylulose-5-phosphate (DXP). This Prochlorococcus marinus (strain NATL2A) protein is 1-deoxy-D-xylulose-5-phosphate synthase.